The sequence spans 855 residues: Sucrose synthase 7 (855 aa).

Positions 279 to 758 (SIFNIVIFSI…GLQRIYECYT (480 aa)) are GT-B glycosyltransferase.

Belongs to the glycosyltransferase 1 family. Plant sucrose synthase subfamily. As to expression, predominantly expressed in roots, flowers and immature seeds.

The protein localises to the cytoplasm. It is found in the membrane. The catalysed reaction is an NDP-alpha-D-glucose + D-fructose = a ribonucleoside 5'-diphosphate + sucrose + H(+). In terms of biological role, sucrose-cleaving enzyme that provides UDP-glucose and fructose for various metabolic pathways. This chain is Sucrose synthase 7 (SUS7), found in Oryza sativa subsp. japonica (Rice).